The chain runs to 192 residues: 3-hydroxyanthranilate 3,4-dioxygenase 1 (192 aa).

Arg50 contacts O2. Residues His54, Glu60, and His102 each coordinate Fe cation. Substrate is bound at residue Glu60. Substrate is bound by residues Arg106 and Glu116. A divalent metal cation contacts are provided by Cys131, Cys134, Cys168, and Cys171.

It belongs to the 3-HAO family. The cofactor is Fe(2+).

Its subcellular location is the cytoplasm. The catalysed reaction is 3-hydroxyanthranilate + O2 = (2Z,4Z)-2-amino-3-carboxymuconate 6-semialdehyde. It functions in the pathway cofactor biosynthesis; NAD(+) biosynthesis; quinolinate from L-kynurenine: step 3/3. Catalyzes the oxidative ring opening of 3-hydroxyanthranilate to 2-amino-3-carboxymuconate semialdehyde, which spontaneously cyclizes to quinolinate. The sequence is that of 3-hydroxyanthranilate 3,4-dioxygenase 1 (bna1-1) from Aspergillus fumigatus (strain CBS 144.89 / FGSC A1163 / CEA10) (Neosartorya fumigata).